Reading from the N-terminus, the 508-residue chain is D-alanine--D-alanyl carrier protein ligase (508 aa).

152–153 (TS) serves as a coordination point for ATP. Residue Asp-198 coordinates D-alanine. 293–298 (NTYGPT) lines the ATP pocket. Residue Val-302 participates in D-alanine binding. ATP is bound by residues Asp-384, 396 to 399 (YRGR), and Lys-495. Lys-495 contributes to the D-alanine binding site.

The protein belongs to the ATP-dependent AMP-binding enzyme family. DltA subfamily.

It localises to the cytoplasm. The catalysed reaction is holo-[D-alanyl-carrier protein] + D-alanine + ATP = D-alanyl-[D-alanyl-carrier protein] + AMP + diphosphate. It participates in cell wall biogenesis; lipoteichoic acid biosynthesis. Functionally, catalyzes the first step in the D-alanylation of lipoteichoic acid (LTA), the activation of D-alanine and its transfer onto the D-alanyl carrier protein (Dcp) DltC. In an ATP-dependent two-step reaction, forms a high energy D-alanyl-AMP intermediate, followed by transfer of the D-alanyl residue as a thiol ester to the phosphopantheinyl prosthetic group of the Dcp. D-alanylation of LTA plays an important role in modulating the properties of the cell wall in Gram-positive bacteria, influencing the net charge of the cell wall. In Lactiplantibacillus plantarum (strain ATCC BAA-793 / NCIMB 8826 / WCFS1) (Lactobacillus plantarum), this protein is D-alanine--D-alanyl carrier protein ligase.